A 593-amino-acid chain; its full sequence is Translocon at the outer membrane of chloroplasts 64 (593 aa).

The Chloroplast intermembrane portion of the chain corresponds to 1–4 (MKSM). Residues 5–25 (ASPSSQIWVILGLGLAGIYVL) form a helical membrane-spanning segment. The Cytoplasmic portion of the chain corresponds to 26–144 (TRKLTQAVKE…NPAVPNRVPG (119 aa)). Residues 145–165 (GSSSGAAVAVAANFVDFSLGV) form a helical membrane-spanning segment. The Chloroplast intermembrane segment spans residues 166 to 403 (DTSGGVRVPA…LSHDYQSRAL (238 aa)). A helical transmembrane segment spans residues 404 to 424 (SLLSIASISGCCQVTVPLGFF). Residues 425–593 (DKNPVSVSLI…SAERLRKLFQ (169 aa)) are Cytoplasmic-facing. 3 TPR repeats span residues 477–510 (AEISKEKGNQAYKDKQWQKAIGFYTEAIKLCGNN), 511–544 (ATYYSNRAQAYLELGSYLQAEEDCTTAISFDKKN), and 545–578 (VKAYFRRGTAREMLGYYKEAIDDFKYALVLEPTN).

As to quaternary structure, part of the Toc complex and of the intermembrane space complex. Interacts with TOC12, TIC22 and with the cytosolic domain of TOC34 in a GTP dependent manner. Interacts (via TPR region) with HSP90 and with HSP70 with low efficiency.

It is found in the plastid. The protein resides in the chloroplast outer membrane. Chaperone receptor mediating Hsp90-dependent protein targeting to chloroplasts. Bi-functional preprotein receptor acting on both sides of the membrane. The protein is Translocon at the outer membrane of chloroplasts 64 (TOC64) of Pisum sativum (Garden pea).